The primary structure comprises 677 residues: Methionine--tRNA ligase (677 aa).

A 'HIGH' region motif is present at residues 15–25 (PYANGSIHLGH). 4 residues coordinate Zn(2+): C146, C149, C159, and C162. Residues 333 to 337 (KMSKS) carry the 'KMSKS' region motif. K336 contributes to the ATP binding site. The tRNA-binding domain maps to 576 to 677 (DFAKIDLRVA…EGAKPGMRVK (102 aa)).

This sequence belongs to the class-I aminoacyl-tRNA synthetase family. MetG type 1 subfamily. As to quaternary structure, homodimer. Zn(2+) serves as cofactor.

It localises to the cytoplasm. It carries out the reaction tRNA(Met) + L-methionine + ATP = L-methionyl-tRNA(Met) + AMP + diphosphate. Is required not only for elongation of protein synthesis but also for the initiation of all mRNA translation through initiator tRNA(fMet) aminoacylation. In Aeromonas hydrophila subsp. hydrophila (strain ATCC 7966 / DSM 30187 / BCRC 13018 / CCUG 14551 / JCM 1027 / KCTC 2358 / NCIMB 9240 / NCTC 8049), this protein is Methionine--tRNA ligase.